Here is a 180-residue protein sequence, read N- to C-terminus: MGVTKKPDLNDPVLRAKLAKGMGHNYYGEPAWPNDLSYIFPVVILGTIACTIGLAVLEPSMIGEPANPFATPLEILPEWYFFPVFQILRTVPNKLLGVLLMGSVPAGSLTVPFLENVNQFQNPFRRPVATTVSLIGTAVALWLGIGAALPIDESLTLGLFQSNLIQLSNIKIFQFFYSYI.

The next 3 helical transmembrane spans lie at 36-56 (LSYI…GLAV), 95-115 (LLGV…PFLE), and 131-151 (TVSL…ALPI).

Belongs to the cytochrome b family. PetD subfamily. In terms of assembly, the 4 large subunits of the cytochrome b6-f complex are cytochrome b6, subunit IV (17 kDa polypeptide, petD), cytochrome f and the Rieske protein, while the 4 small subunits are petG, petL, petM and petN. The complex functions as a dimer.

The protein localises to the plastid. The protein resides in the chloroplast thylakoid membrane. Its function is as follows. Component of the cytochrome b6-f complex, which mediates electron transfer between photosystem II (PSII) and photosystem I (PSI), cyclic electron flow around PSI, and state transitions. This Pinus thunbergii (Japanese black pine) protein is Cytochrome b6-f complex subunit 4.